An 873-amino-acid chain; its full sequence is Bifunctional heparan sulfate N-deacetylase/N-sulfotransferase 3 (873 aa).

Residues 1 to 13 lie on the Cytoplasmic side of the membrane; that stretch reads MSFIMKLHRHFQR. A helical; Signal-anchor for type II membrane protein transmembrane segment spans residues 14 to 34; the sequence is TVILLATFCMVSIIISAYYLY. At 35-873 the chain is on the lumenal side; that stretch reads SGYKQENELS…WLRQELQKVR (839 aa). Residues 36 to 589 are heparan sulfate N-deacetylase 3; that stretch reads GYKQENELSE…KRHRDIWSKE (554 aa). N-linked (GlcNAc...) asparagine glycosylation is found at Asn146, Asn226, Asn342, and Asn392. A heparan sulfate N-sulfotransferase 3 region spans residues 590–873; that stretch reads KTCDRLPKFL…WLRQELQKVR (284 aa). The For sulfotransferase activity role is filled by Lys605. 605–609 lines the 3'-phosphoadenylyl sulfate pocket; it reads KTGTT. An N-linked (GlcNAc...) asparagine glycan is attached at Asn658. Ser703 is a 3'-phosphoadenylyl sulfate binding site. Asn794 carries an N-linked (GlcNAc...) asparagine glycan. Cys809 and Cys819 are joined by a disulfide. 824-828 is a 3'-phosphoadenylyl sulfate binding site; sequence KGRKY.

This sequence belongs to the sulfotransferase 1 family. NDST subfamily. In terms of assembly, monomer. In terms of tissue distribution, expressed in brain, kidney, liver, fetal and adult lung, adult pancreas, placenta, fetal spleen and fetal thymus. Not detected in adult/ fetal heart and skeletal muscle.

The protein resides in the golgi apparatus membrane. The catalysed reaction is alpha-D-glucosaminyl-[heparan sulfate](n) + 3'-phosphoadenylyl sulfate = N-sulfo-alpha-D-glucosaminyl-[heparan sulfate](n) + adenosine 3',5'-bisphosphate + 2 H(+). It participates in glycan metabolism; heparan sulfate biosynthesis. Its pathway is glycan metabolism; heparin biosynthesis. Essential bifunctional enzyme that catalyzes both the N-deacetylation and the N-sulfation of glucosamine (GlcNAc) of the glycosaminoglycan in heparan sulfate. Modifies the GlcNAc-GlcA disaccharide repeating sugar backbone to make N-sulfated heparosan, a prerequisite substrate for later modifications in heparin biosynthesis. Has high deacetylase activity but low sulfotransferase activity. The sequence is that of Bifunctional heparan sulfate N-deacetylase/N-sulfotransferase 3 from Homo sapiens (Human).